The chain runs to 360 residues: Ferrochelatase (360 aa).

Fe cation-binding residues include His210 and Glu291.

It belongs to the ferrochelatase family.

It is found in the cytoplasm. The enzyme catalyses heme b + 2 H(+) = protoporphyrin IX + Fe(2+). It participates in porphyrin-containing compound metabolism; protoheme biosynthesis; protoheme from protoporphyrin-IX: step 1/1. Functionally, catalyzes the ferrous insertion into protoporphyrin IX. This chain is Ferrochelatase, found in Pseudoalteromonas atlantica (strain T6c / ATCC BAA-1087).